We begin with the raw amino-acid sequence, 390 residues long: Nucleotide-sugar uncharacterized transporter 1 (390 aa).

A run of 10 helical transmembrane segments spans residues 61–81, 89–109, 128–148, 155–175, 182–201, 206–228, 249–269, 278–298, 306–326, and 329–349; these read ICGP…IIFM, IGFE…YLLM, SLLP…LANV, VGFY…AEFL, SFMK…VATV, FSLF…KILW, ITLL…ALSF, AILV…LALG, VVLG…IFGS, and GFIS…YTYL. A compositionally biased stretch (low complexity) spans 356–365; that stretch reads LKTSSSSSAL. Residues 356-390 form a disordered region; the sequence is LKTSSSSSALSEKKSRFSDLKDDDKNLEPYGSEAV. The segment covering 366 to 382 has biased composition (basic and acidic residues); the sequence is SEKKSRFSDLKDDDKNL.

It belongs to the TPT transporter family. TPT (TC 2.A.7.9) subfamily.

The protein resides in the membrane. This is Nucleotide-sugar uncharacterized transporter 1 from Arabidopsis thaliana (Mouse-ear cress).